We begin with the raw amino-acid sequence, 100 residues long: Movement protein TGBp3 (100 aa).

At 1-41 the chain is on the lumenal side; sequence MQTAPREYSTSGPTAVLAPTTNTQHYAPYSLYRFLSSHKLD. A helical transmembrane segment spans residues 42-59; that stretch reads LLLGIALLVFLYVITAAP. The Cytoplasmic segment spans residues 60 to 100; that stretch reads KEVCQVVITGESVVIRNCQQPDRILANLNLSPWNGVKFPLL.

Belongs to the Tymovirales TGBp3 protein family.

The protein resides in the host endoplasmic reticulum membrane. Functionally, plays a role in viral cell-to-cell propagation, by facilitating genome transport to neighboring plant cells through plasmosdesmata. May induce the formation of granular vesicles derived from the Endoplasmic reticulum, which align on actin filaments. In Narcissus mosaic virus (NMV), this protein is Movement protein TGBp3.